The chain runs to 753 residues: 5-methyltetrahydropteroyltriglutamate--homocysteine methyltransferase (753 aa).

5-methyltetrahydropteroyltri-L-glutamate-binding positions include 17–20 (RELK) and Lys-117. L-homocysteine-binding positions include 431–433 (IGS) and Glu-484. L-methionine-binding positions include 431–433 (IGS) and Glu-484. 5-methyltetrahydropteroyltri-L-glutamate is bound by residues 515 to 516 (RC) and Trp-561. Asp-599 contacts L-homocysteine. Residue Asp-599 participates in L-methionine binding. Glu-605 contributes to the 5-methyltetrahydropteroyltri-L-glutamate binding site. 3 residues coordinate Zn(2+): His-641, Cys-643, and Glu-665. His-694 serves as the catalytic Proton donor. Cys-726 contributes to the Zn(2+) binding site.

It belongs to the vitamin-B12 independent methionine synthase family. Zn(2+) serves as cofactor.

It catalyses the reaction 5-methyltetrahydropteroyltri-L-glutamate + L-homocysteine = tetrahydropteroyltri-L-glutamate + L-methionine. It functions in the pathway amino-acid biosynthesis; L-methionine biosynthesis via de novo pathway; L-methionine from L-homocysteine (MetE route): step 1/1. In terms of biological role, catalyzes the transfer of a methyl group from 5-methyltetrahydrofolate to homocysteine resulting in methionine formation. The protein is 5-methyltetrahydropteroyltriglutamate--homocysteine methyltransferase of Escherichia coli (strain ATCC 8739 / DSM 1576 / NBRC 3972 / NCIMB 8545 / WDCM 00012 / Crooks).